Reading from the N-terminus, the 592-residue chain is V-type ATP synthase alpha chain 2 (592 aa).

Residue 237–244 (GGFGTGKT) coordinates ATP.

This sequence belongs to the ATPase alpha/beta chains family.

It carries out the reaction ATP + H2O + 4 H(+)(in) = ADP + phosphate + 5 H(+)(out). Its function is as follows. Produces ATP from ADP in the presence of a proton gradient across the membrane. The V-type alpha chain is a catalytic subunit. This Clostridium tetani (strain Massachusetts / E88) protein is V-type ATP synthase alpha chain 2.